Consider the following 524-residue polypeptide: Alkaline phosphatase, tissue-nonspecific isozyme (524 aa).

The N-terminal stretch at 1-17 is a signal peptide; the sequence is MILPFLVLAIGTCLTNS. Asp-60 lines the Mg(2+) pocket. The Zn(2+) site is built by Asp-60 and Ser-110. Ser-110 (phosphoserine intermediate) is an active-site residue. The residue at position 110 (Ser-110) is a Phosphoserine. A disulfide bridge connects residues Cys-139 and Cys-201. The N-linked (GlcNAc...) asparagine glycan is linked to Asn-140. Residue Thr-173 coordinates Mg(2+). Residue Asn-230 is glycosylated (N-linked (GlcNAc...) asparagine). Residue Glu-235 participates in Ca(2+) binding. Residue Asn-271 is glycosylated (N-linked (GlcNAc...) asparagine). Ca(2+) is bound by residues Phe-290 and Glu-291. Residue Asn-303 is glycosylated (N-linked (GlcNAc...) asparagine). A Ca(2+)-binding site is contributed by Asp-306. Residue Glu-332 coordinates Mg(2+). Positions 337, 341, 378, and 379 each coordinate Zn(2+). N-linked (GlcNAc...) asparagine glycosylation occurs at Asn-430. Zn(2+) is bound at residue His-454. A disulfide bridge links Cys-489 with Cys-497. Residue Ser-501 is the site of GPI-anchor amidated serine attachment. Positions 502–524 are cleaved as a propeptide — removed in mature form; the sequence is SASSPSPGALLLPLALFPLRTLF.

It belongs to the alkaline phosphatase family. As to quaternary structure, homodimer. The cofactor is Mg(2+). Requires Zn(2+) as cofactor. Ca(2+) serves as cofactor. In terms of processing, N-glycosylated.

The protein localises to the cell membrane. The protein resides in the extracellular vesicle membrane. It localises to the mitochondrion membrane. It is found in the mitochondrion intermembrane space. It catalyses the reaction a phosphate monoester + H2O = an alcohol + phosphate. The enzyme catalyses diphosphate + H2O = 2 phosphate + H(+). It carries out the reaction pyridoxal 5'-phosphate + H2O = pyridoxal + phosphate. The catalysed reaction is phosphoethanolamine + H2O = ethanolamine + phosphate. It catalyses the reaction N-phosphocreatine + H2O = creatine + phosphate. The enzyme catalyses ATP + H2O = ADP + phosphate + H(+). It carries out the reaction ADP + H2O = AMP + phosphate + H(+). The catalysed reaction is AMP + H2O = adenosine + phosphate. Phosphatase activity is specifically inhibited by 5-((5-chloro-2-methoxyphenyl)sulfonamido)nicotinamide (SBI-425). Its function is as follows. Alkaline phosphatase that metabolizes various phosphate compounds and plays a key role in skeletal mineralization and adaptive thermogenesis. Has broad substrate specificity and can hydrolyze a considerable variety of compounds: however, only a few substrates, such as diphosphate (inorganic pyrophosphate; PPi), pyridoxal 5'-phosphate (PLP) and N-phosphocreatine are natural substrates. Plays an essential role in skeletal and dental mineralization via its ability to hydrolyze extracellular diphosphate, a potent mineralization inhibitor, to phosphate: it thereby promotes hydroxyapatite crystal formation and increases inorganic phosphate concentration. Acts in a non-redundant manner with PHOSPHO1 in skeletal mineralization: while PHOSPHO1 mediates the initiation of hydroxyapatite crystallization in the matrix vesicles (MVs), ALPL/TNAP catalyzes the spread of hydroxyapatite crystallization in the extracellular matrix. Also promotes dephosphorylation of osteopontin (SSP1), an inhibitor of hydroxyapatite crystallization in its phosphorylated state; it is however unclear whether ALPL/TNAP mediates SSP1 dephosphorylation via a direct or indirect manner. Catalyzes dephosphorylation of PLP to pyridoxal (PL), the transportable form of vitamin B6, in order to provide a sufficient amount of PLP in the brain, an essential cofactor for enzymes catalyzing the synthesis of diverse neurotransmitters. Additionally, also able to mediate ATP degradation in a stepwise manner to adenosine, thereby regulating the availability of ligands for purinergic receptors. Also capable of dephosphorylating microbial products, such as lipopolysaccharides (LPS) as well as other phosphorylated small-molecules, such as poly-inosine:cytosine (poly I:C). Acts as a key regulator of adaptive thermogenesis as part of the futile creatine cycle: localizes to the mitochondria of thermogenic fat cells and acts by mediating hydrolysis of N-phosphocreatine to initiate a futile cycle of creatine dephosphorylation and phosphorylation. During the futile creatine cycle, creatine and N-phosphocreatine are in a futile cycle, which dissipates the high energy charge of N-phosphocreatine as heat without performing any mechanical or chemical work. The chain is Alkaline phosphatase, tissue-nonspecific isozyme (Alpl) from Rattus norvegicus (Rat).